We begin with the raw amino-acid sequence, 61 residues long: Furostanol glycoside 26-O-beta-glucosidase (61 aa).

Catalysis depends on Asp33, which acts as the Proton donor/acceptor. Asp33 is a binding site for D-glucose.

Belongs to the glycosyl hydrolase 3 family. In terms of assembly, monomer. Post-translationally, glycosylated. As to expression, expressed in petioles and leaves, but not in fruits.

It carries out the reaction protodioscin + H2O = 26-deglucoprotodioscin + D-glucose. With respect to regulation, inhibited by Hg(2+) and D-glucono-1,5-lactone. Its function is as follows. Beta-glucosidase highly specific for the cleavage of C-26-bound glucose moiety of furostanol glycosides torvosides A and H. Hydrolyzes only p-nitrophenyl-beta-glucoside, but not p-nitrophenyl-beta-D-fucoside, p-nitrophenyl-beta-L-fucoside, p-nitrophenyl-beta-D-xyloside, p-nitrophenyl-beta-D-galactoside, p-nitrophenyl-beta-D-NAc-glucosamine, p-nitrophenyl-beta-D-mannoside or any of the p-nitrophenyl-alpha-glycosides tested. The protein is Furostanol glycoside 26-O-beta-glucosidase of Solanum torvum (Turkey berry).